A 285-amino-acid chain; its full sequence is Ribosomal RNA small subunit methyltransferase A (285 aa).

S-adenosyl-L-methionine is bound by residues Asn-21, Leu-23, Gly-48, Glu-69, Asp-94, and Asn-127.

The protein belongs to the class I-like SAM-binding methyltransferase superfamily. rRNA adenine N(6)-methyltransferase family. RsmA subfamily.

The protein localises to the cytoplasm. It catalyses the reaction adenosine(1518)/adenosine(1519) in 16S rRNA + 4 S-adenosyl-L-methionine = N(6)-dimethyladenosine(1518)/N(6)-dimethyladenosine(1519) in 16S rRNA + 4 S-adenosyl-L-homocysteine + 4 H(+). In terms of biological role, specifically dimethylates two adjacent adenosines (A1518 and A1519) in the loop of a conserved hairpin near the 3'-end of 16S rRNA in the 30S particle. May play a critical role in biogenesis of 30S subunits. The protein is Ribosomal RNA small subunit methyltransferase A of Koribacter versatilis (strain Ellin345).